The following is a 622-amino-acid chain: Chaperone protein HscA homolog (622 aa).

The protein belongs to the heat shock protein 70 family.

Functionally, chaperone involved in the maturation of iron-sulfur cluster-containing proteins. Has a low intrinsic ATPase activity which is markedly stimulated by HscB. The polypeptide is Chaperone protein HscA homolog (Delftia acidovorans (strain DSM 14801 / SPH-1)).